The sequence spans 443 residues: Serine/threonine-protein phosphatase 2A 55 kDa regulatory subunit B beta isoform (443 aa).

WD repeat units lie at residues 22–61, 87–128, 171–209, and 220–260; these read TEAD…KNQV, EIEE…KRPE, AHTY…QSFN, and ELTE…LCDR. Residue S275 is modified to Phosphoserine. WD repeat units follow at residues 279–317, 334–375, and 410–442; these read EIIS…RPVE, ENDC…DVTL, and DFSK…QDKV. The residue at position 295 (Y295) is a Phosphotyrosine. Position 298 is a phosphothreonine (T298).

This sequence belongs to the phosphatase 2A regulatory subunit B family. In terms of assembly, PP2A consists of a common heterodimeric core enzyme, composed of a 36 kDa catalytic subunit (subunit C) and a 65 kDa constant regulatory subunit (PR65 or subunit A), that associates with a variety of regulatory subunits. Proteins that associate with the core dimer include three families of regulatory subunits B (the R2/B/PR55/B55, R3/B''/PR72/PR130/PR59 and R5/B'/B56 families), the 48 kDa variable regulatory subunit, viral proteins, and cell signaling molecules. Interacts with IER5 (via N- and C-terminal regions). Interacts with TOMM22. In terms of tissue distribution, expressed in the brain. Isoform 1 and isoform 2 are expressed in the forbrain. Isoform 1 is more strongly expressed than isoform 2 in the olfactory bulb. Isoform 1 and isoform 2 are weakly expressed in the cerebellum. Isoform 1 is expressed in the testis. Isoform 2 expression is undetectable at birth rising to adult level at day 14.

The protein resides in the cytoplasm. The protein localises to the cytoskeleton. It localises to the membrane. Its subcellular location is the mitochondrion. It is found in the mitochondrion outer membrane. Functionally, the B regulatory subunit might modulate substrate selectivity and catalytic activity, and might also direct the localization of the catalytic enzyme to a particular subcellular compartment. Within the PP2A holoenzyme complex, isoform 2 is required to promote proapoptotic activity. Isoform 2 regulates neuronal survival through the mitochondrial fission and fusion balance. The chain is Serine/threonine-protein phosphatase 2A 55 kDa regulatory subunit B beta isoform (Ppp2r2b) from Rattus norvegicus (Rat).